The chain runs to 612 residues: DNA mismatch repair protein MutL (612 aa).

This sequence belongs to the DNA mismatch repair MutL/HexB family.

This protein is involved in the repair of mismatches in DNA. It is required for dam-dependent methyl-directed DNA mismatch repair. May act as a 'molecular matchmaker', a protein that promotes the formation of a stable complex between two or more DNA-binding proteins in an ATP-dependent manner without itself being part of a final effector complex. The protein is DNA mismatch repair protein MutL of Bartonella quintana (strain Toulouse) (Rochalimaea quintana).